A 527-amino-acid chain; its full sequence is L-amino-acid oxidase (527 aa).

Positions 1–27 (MDLHRAPWKSSAAAAVLLLALFSGAAA) are cleaved as a signal peptide. Cys37 and Cys200 are disulfide-bonded. N-linked (GlcNAc...) asparagine glycosylation occurs at Asn58. FAD is bound by residues 70–71 (VA), 90–91 (EA), Arg98, 114–117 (GAMR), and Val288. Arg117 lines the substrate pocket. Asn393 carries N-linked (GlcNAc...) asparagine glycosylation. Tyr403 is a substrate binding site. Residues Glu485 and 492–497 (AWMESA) contribute to the FAD site. A substrate-binding site is contributed by 492-493 (AW).

As to quaternary structure, homodimer. Requires FAD as cofactor. Expression mainly observed in plasma, spleen, kidney and gills with low levels detected in blood and no expression detected in brain, liver, heart, muscle or intestine (at protein level).

It is found in the secreted. The enzyme catalyses an L-alpha-amino acid + O2 + H2O = a 2-oxocarboxylate + H2O2 + NH4(+). Its function is as follows. Inhibits the growth of both Gram-negative and Gram-positive bacteria. Displays strong antibacterial activity towards V.cholerae and E.tarda. Causes deformation of the surface of S.aureus and the formation of pores on the surface of E.coli. Strong antiparasitic activity is seen towards C.irritans, T.brucei and I.multifiliis. Cilia of treated theronts are lost and the macronucleus swells, inducing cell membrane rupture and efflux of the cytoplasm. In Siganus canaliculatus (White-spotted spinefoot), this protein is L-amino-acid oxidase.